Consider the following 365-residue polypeptide: UDP-N-acetylglucosamine--N-acetylmuramyl-(pentapeptide) pyrophosphoryl-undecaprenol N-acetylglucosamine transferase (365 aa).

Residues 10–12 (TGG), N128, R170, S199, I250, and Q295 contribute to the UDP-N-acetyl-alpha-D-glucosamine site.

The protein belongs to the glycosyltransferase 28 family. MurG subfamily.

It localises to the cell inner membrane. The catalysed reaction is di-trans,octa-cis-undecaprenyl diphospho-N-acetyl-alpha-D-muramoyl-L-alanyl-D-glutamyl-meso-2,6-diaminopimeloyl-D-alanyl-D-alanine + UDP-N-acetyl-alpha-D-glucosamine = di-trans,octa-cis-undecaprenyl diphospho-[N-acetyl-alpha-D-glucosaminyl-(1-&gt;4)]-N-acetyl-alpha-D-muramoyl-L-alanyl-D-glutamyl-meso-2,6-diaminopimeloyl-D-alanyl-D-alanine + UDP + H(+). It participates in cell wall biogenesis; peptidoglycan biosynthesis. In terms of biological role, cell wall formation. Catalyzes the transfer of a GlcNAc subunit on undecaprenyl-pyrophosphoryl-MurNAc-pentapeptide (lipid intermediate I) to form undecaprenyl-pyrophosphoryl-MurNAc-(pentapeptide)GlcNAc (lipid intermediate II). The protein is UDP-N-acetylglucosamine--N-acetylmuramyl-(pentapeptide) pyrophosphoryl-undecaprenol N-acetylglucosamine transferase of Chlorobium luteolum (strain DSM 273 / BCRC 81028 / 2530) (Pelodictyon luteolum).